The primary structure comprises 119 residues: UPF0738 protein BAA_1286 (119 aa).

The protein belongs to the UPF0738 family.

The protein is UPF0738 protein BAA_1286 of Bacillus anthracis (strain A0248).